The sequence spans 422 residues: Putative acid phosphatase 5 (422 aa).

Positions 1–13 are cleaved as a signal peptide; the sequence is MLLLLVLLIGASG. Catalysis depends on H40, which acts as the Nucleophile. Residues N104, N210, and N218 are each glycosylated (N-linked (GlcNAc...) asparagine). Disulfide bonds link C152/C363, C205/C302, and C338/C342. D279 acts as the Proton donor in catalysis. Residues N312 and N323 are each glycosylated (N-linked (GlcNAc...) asparagine).

Belongs to the histidine acid phosphatase family.

It carries out the reaction a phosphate monoester + H2O = an alcohol + phosphate. This Caenorhabditis elegans protein is Putative acid phosphatase 5 (pho-5).